The chain runs to 417 residues: NADH-quinone oxidoreductase subunit D (417 aa).

The protein belongs to the complex I 49 kDa subunit family. As to quaternary structure, NDH-1 is composed of 14 different subunits. Subunits NuoB, C, D, E, F, and G constitute the peripheral sector of the complex.

It localises to the cell inner membrane. The catalysed reaction is a quinone + NADH + 5 H(+)(in) = a quinol + NAD(+) + 4 H(+)(out). Its function is as follows. NDH-1 shuttles electrons from NADH, via FMN and iron-sulfur (Fe-S) centers, to quinones in the respiratory chain. The immediate electron acceptor for the enzyme in this species is believed to be ubiquinone. Couples the redox reaction to proton translocation (for every two electrons transferred, four hydrogen ions are translocated across the cytoplasmic membrane), and thus conserves the redox energy in a proton gradient. This Cupriavidus necator (strain ATCC 17699 / DSM 428 / KCTC 22496 / NCIMB 10442 / H16 / Stanier 337) (Ralstonia eutropha) protein is NADH-quinone oxidoreductase subunit D.